The following is an 81-amino-acid chain: Costars family protein ABRACL (81 aa).

This sequence belongs to the costars family.

The polypeptide is Costars family protein ABRACL (Salmo salar (Atlantic salmon)).